The chain runs to 530 residues: MTTIAAVSPLDGRLLGHFPVSKPALIQQQLTKSRRAALLWRELPVTERVKRLSPLKKQLLDNLDRLCETIRLSTGKVRTEALLGEIYPVLDLLAYYQKRAPRILRTRAVSTSPFAFPAATARIERRPYGVVAVISPWNYPFHLSVAPLLTALLAGNAVILKPSELCLPVGQLIVDLFATLDLPDGLVQWVIGDGQTGAELIDARPDLVFFTGGLQTGRAVMQRAARHPIPVMLELGGKDTMLVLADADLKRASAAALYGAFCNSGQVCVSVERLYVQQACFAEFLAMLLKGLSKLKVGHDPHGDVGVMTSARQIDIVQAHYEDAIAQGAKASGPLLRDGNVVQPVVLWDVHHGMKVMREETFGPLLPVMPFSDEAEAIKLANDSDLGLNASIWSQDIIKAERLAGQLDVGNWAINDVLKNVGHSGLPFGGVKQSGFGRYHGAEGLLNFSYPVSGLTNRSRLPKEPNWFPYSASGYENFKGFLDFIYGEDSMLQRGRRNQQALQAFREFSIFDWTQRWQNLKLLFSWTRDD.

Active-site residues include Glu234 and Cys268.

Belongs to the aldehyde dehydrogenase family.

It catalyses the reaction all-trans-4,4'-diapolycopen-4-al + A + H2O = all-trans-4,4'-diapolycopen-4-oate + AH2 + H(+). It carries out the reaction all-trans-4,4'-diapolycopene-4,4'-dial + 2 A + 2 H2O = all-trans-4,4'-diapolycopene-4,4'-dioate + 2 AH2 + 2 H(+). The protein operates within carotenoid biosynthesis. Its function is as follows. Involved in the biosynthesis of C30 carotenoids. Catalyzes the oxidation of 4,4'-diapolycopene-4,4'-dial to yield 4,4'-diapolycopene-4,4'-dioic acid. Also able to catalyze the oxidation of 4,4'-diapolycopen-4-al to yield 4,4'-diapolycopen-4-oic acid. The protein is 4,4'-diapolycopene aldehyde oxidase of Methylomonas sp.